Here is a 262-residue protein sequence, read N- to C-terminus: Ribosomal RNA small subunit methyltransferase A (262 aa).

S-adenosyl-L-methionine is bound by residues Asn-13, Leu-15, Gly-40, Glu-61, Asp-85, and Asn-105.

The protein belongs to the class I-like SAM-binding methyltransferase superfamily. rRNA adenine N(6)-methyltransferase family. RsmA subfamily.

Its subcellular location is the cytoplasm. The catalysed reaction is adenosine(1518)/adenosine(1519) in 16S rRNA + 4 S-adenosyl-L-methionine = N(6)-dimethyladenosine(1518)/N(6)-dimethyladenosine(1519) in 16S rRNA + 4 S-adenosyl-L-homocysteine + 4 H(+). Specifically dimethylates two adjacent adenosines (A1518 and A1519) in the loop of a conserved hairpin near the 3'-end of 16S rRNA in the 30S particle. May play a critical role in biogenesis of 30S subunits. In Laribacter hongkongensis (strain HLHK9), this protein is Ribosomal RNA small subunit methyltransferase A.